The following is a 794-amino-acid chain: Protein smoothened (794 aa).

The signal sequence occupies residues 1-15 (GPCWLWALALGLALG). Over 16–201 (PRRCPAAPLN…FTETEHREMH (186 aa)) the chain is Extracellular. N-linked (GlcNAc...) asparagine glycosylation occurs at Asn25. 5 disulfides stabilise this stretch: Cys34-Cys148, Cys40-Cys104, Cys48-Cys97, Cys88-Cys124, and Cys117-Cys139. In terms of domain architecture, FZ spans 35-151 (RRPAACERLR…DRFPEGCPNE (117 aa)). A cholesterol-binding site is contributed by Asp65. N-linked (GlcNAc...) asparagine glycosylation occurs at Asn158. 2 cysteine pairs are disulfide-bonded: Cys163–Cys183 and Cys187–Cys264. A helical transmembrane segment spans residues 202-222 (VYIAFSSVTISCTFFTLATFV). The Cytoplasmic segment spans residues 223–231 (ADWRNSNRY). The helical transmembrane segment at 232–252 (PAVILFYVNACFFVGSIGCVA) threads the bilayer. Residues 253-283 (QFMDGARDEIVCRADGTMRLGEPTSNETLSC) lie on the Extracellular side of the membrane. A glycan (N-linked (GlcNAc...) asparagine) is linked at Asn278. Residues Cys283 and Cys359 are joined by a disulfide bond. A helical membrane pass occupies residues 284 to 304 (VIIFVIVYYSLMSGVIWFVML). The Cytoplasmic portion of the chain corresponds to 305-327 (TYAWHTSFKALGTTYQPLLGKTS). Residues 328–348 (YFHLITWSIPFVLTVAILAVA) form a helical membrane-spanning segment. Residues 349–371 (QVDGDSVSGICFVGYKNYRYRAG) are Extracellular-facing. Tyr363 contacts cholesterol. Residues 372-392 (FVLAPIGLVLIVGGYFLIRGV) form a helical membrane-spanning segment. The Cytoplasmic portion of the chain corresponds to 393–420 (MTLFSIKSNHPGLLSEKAASKINETMLR). The helical transmembrane segment at 421–440 (LGIFGFLAFGFVFITFGCHF) threads the bilayer. Residues 441–493 (YDFFNQAEWERSFREYVLCEANVTIATQTNKPIPECEIKNRPSLLVEKINLFA) are Extracellular-facing. A disulfide bridge links Cys459 with Cys476. A glycan (N-linked (GlcNAc...) asparagine) is linked at Asn462. Residues 494–514 (MFGTGISMSTWVWTKATLLIW) traverse the membrane as a helical segment. Residues 515–794 (KRTWCRLTGQ…AELLDADLDF (280 aa)) lie on the Cytoplasmic side of the membrane. 2 disordered regions span residues 634–655 (LQKR…CPER) and 723–773 (PFCP…RAGL). Basic residues predominate over residues 637-647 (RSRKKKRRKKK).

It belongs to the G-protein coupled receptor Fz/Smo family. As to quaternary structure, homodimer.

It localises to the cell membrane. Its subcellular location is the cell projection. The protein localises to the cilium. In terms of biological role, g protein-coupled receptor which associates with the patched protein (PTCH) to transduce hedgehog protein signaling. Binding of sonic hedgehog (SHH) to its receptor patched prevents inhibition of smoothened (SMO) by patched. When active, SMO binds to and sequesters protein kinase A catalytic subunit PRKACA at the cell membrane, preventing PRKACA-mediated phosphorylation of GLI transcription factors which releases the GLI proteins from PRKACA-mediated inhibition and allows for transcriptional activation of hedgehog pathway target genes. The sequence is that of Protein smoothened (SMO) from Gallus gallus (Chicken).